Here is a 651-residue protein sequence, read N- to C-terminus: Peptide-N(4)-(N-acetyl-beta-glucosaminyl)asparagine amidase (651 aa).

In terms of domain architecture, PUB spans 29-90 (EASRLLLTYA…EGETHMVFPK (62 aa)). Zn(2+) contacts are provided by C246, C249, C279, and C282. C305 functions as the Nucleophile in the catalytic mechanism. Active-site residues include H332 and D349. The region spanning 450-651 (EFGGRTSGSM…LEMIIKLADL (202 aa)) is the PAW domain.

This sequence belongs to the transglutaminase-like superfamily. PNGase family. It depends on Zn(2+) as a cofactor.

It localises to the cytoplasm. It catalyses the reaction Hydrolysis of an N(4)-(acetyl-beta-D-glucosaminyl)asparagine residue in which the glucosamine residue may be further glycosylated, to yield a (substituted) N-acetyl-beta-D-glucosaminylamine and a peptide containing an aspartate residue.. Specifically deglycosylates the denatured form of N-linked glycoproteins in the cytoplasm and assists their proteasome-mediated degradation. Cleaves the beta-aspartyl-glucosamine (GlcNAc) of the glycan and the amide side chain of Asn, converting Asn to Asp. Prefers proteins containing high-mannose over those bearing complex type oligosaccharides. Can recognize misfolded proteins in the endoplasmic reticulum that are exported to the cytosol to be destroyed and deglycosylate them, while it has no activity toward native proteins. Deglycosylation is a prerequisite for subsequent proteasome-mediated degradation of some, but not all, misfolded glycoproteins. This Gallus gallus (Chicken) protein is Peptide-N(4)-(N-acetyl-beta-glucosaminyl)asparagine amidase (NGLY1).